The primary structure comprises 349 residues: Nicotinate-nucleotide--dimethylbenzimidazole phosphoribosyltransferase (349 aa).

The disordered stretch occupies residues 1-20 (MEFATVSPPDPGTAAAARAR). Glutamate 313 acts as the Proton acceptor in catalysis.

Belongs to the CobT family.

The enzyme catalyses 5,6-dimethylbenzimidazole + nicotinate beta-D-ribonucleotide = alpha-ribazole 5'-phosphate + nicotinate + H(+). It participates in nucleoside biosynthesis; alpha-ribazole biosynthesis; alpha-ribazole from 5,6-dimethylbenzimidazole: step 1/2. Functionally, catalyzes the synthesis of alpha-ribazole-5'-phosphate from nicotinate mononucleotide (NAMN) and 5,6-dimethylbenzimidazole (DMB). This chain is Nicotinate-nucleotide--dimethylbenzimidazole phosphoribosyltransferase, found in Mycolicibacterium paratuberculosis (strain ATCC BAA-968 / K-10) (Mycobacterium paratuberculosis).